Here is a 414-residue protein sequence, read N- to C-terminus: DNA primase small subunit PriS (414 aa).

Catalysis depends on residues Asp-98, Asp-100, and Asp-312.

The protein belongs to the eukaryotic-type primase small subunit family. Heterodimer of a small subunit (PriS) and a large subunit (PriL). Mg(2+) is required as a cofactor. Requires Mn(2+) as cofactor.

Catalytic subunit of DNA primase, an RNA polymerase that catalyzes the synthesis of short RNA molecules used as primers for DNA polymerase during DNA replication. The small subunit contains the primase catalytic core and has DNA synthesis activity on its own. Binding to the large subunit stabilizes and modulates the activity, increasing the rate of DNA synthesis while decreasing the length of the DNA fragments, and conferring RNA synthesis capability. The DNA polymerase activity may enable DNA primase to also catalyze primer extension after primer synthesis. May also play a role in DNA repair. The sequence is that of DNA primase small subunit PriS from Methanosarcina mazei (strain ATCC BAA-159 / DSM 3647 / Goe1 / Go1 / JCM 11833 / OCM 88) (Methanosarcina frisia).